Consider the following 128-residue polypeptide: NADPH-dependent 7-cyano-7-deazaguanine reductase (128 aa).

The active-site Thioimide intermediate is the cysteine 39. Aspartate 46 acts as the Proton donor in catalysis. Substrate is bound by residues 61 to 63 (IEL) and 80 to 81 (HE).

The protein belongs to the GTP cyclohydrolase I family. QueF type 1 subfamily.

It localises to the cytoplasm. It carries out the reaction 7-aminomethyl-7-carbaguanine + 2 NADP(+) = 7-cyano-7-deazaguanine + 2 NADPH + 3 H(+). Its pathway is tRNA modification; tRNA-queuosine biosynthesis. In terms of biological role, catalyzes the NADPH-dependent reduction of 7-cyano-7-deazaguanine (preQ0) to 7-aminomethyl-7-deazaguanine (preQ1). The sequence is that of NADPH-dependent 7-cyano-7-deazaguanine reductase from Magnetococcus marinus (strain ATCC BAA-1437 / JCM 17883 / MC-1).